A 1231-amino-acid polypeptide reads, in one-letter code: Alpha-protein kinase 1 (1231 aa).

Residues Phe61, Gln67, Arg116, 150 to 153 (RQAR), Asp231, Lys233, 236 to 237 (ST), and Phe295 contribute to the ADP-D-glycero-beta-D-manno-heptose site. Disordered regions lie at residues 508–540 (ERVS…RSWT), 609–637 (GSGQ…SSRA), 692–739 (GSNN…GDVP), 767–791 (TFAP…SPSQ), 811–843 (PDGS…DEEG), and 859–888 (AHRP…PIFD). Residues 509-522 (RVSSQDSRSTASSK) are compositionally biased toward polar residues. The segment covering 524–537 (SKKDQGKLQRERGR) has biased composition (basic and acidic residues). The span at 700 to 714 (SSHSCGSDSWSLSSS) shows a compositional bias: low complexity. Residues 775–784 (PEGETAESTD) show a composition bias toward acidic residues. Positions 1003-1223 (KYSKKSELWT…ICHRLSLTRP (221 aa)) constitute an Alpha-type protein kinase domain.

This sequence belongs to the protein kinase superfamily. Alpha-type protein kinase family. ALPK subfamily. Widely expressed. Expressed in the retina and in sweat glands, especially in the myoepithelial cells.

The protein localises to the cytoplasm. Its subcellular location is the cytosol. It localises to the cytoskeleton. The protein resides in the spindle pole. It is found in the microtubule organizing center. The protein localises to the centrosome. Its subcellular location is the cell projection. It localises to the cilium. The catalysed reaction is L-seryl-[protein] + ATP = O-phospho-L-seryl-[protein] + ADP + H(+). It carries out the reaction L-threonyl-[protein] + ATP = O-phospho-L-threonyl-[protein] + ADP + H(+). Serine/threonine-protein kinase activity is stimulated upon ADP-D-glycero-beta-D-manno-heptose (ADP-Heptose)-binding. Its function is as follows. Serine/threonine-protein kinase that detects bacterial pathogen-associated molecular pattern metabolites (PAMPs) and initiates an innate immune response, a critical step for pathogen elimination and engagement of adaptive immunity. Specifically recognizes and binds ADP-D-glycero-beta-D-manno-heptose (ADP-Heptose), a potent PAMP present in all Gram-negative and some Gram-positive bacteria. ADP-Heptose-binding stimulates its kinase activity to phosphorylate and activate TIFA, triggering pro-inflammatory NF-kappa-B signaling. May be involved in monosodium urate monohydrate (MSU)-induced inflammation by mediating phosphorylation of unconventional myosin MYO9A. May also play a role in apical protein transport by mediating phosphorylation of unconventional myosin MYO1A. May play a role in ciliogenesis. The protein is Alpha-protein kinase 1 of Mus musculus (Mouse).